Reading from the N-terminus, the 372-residue chain is Putative glutamate--cysteine ligase 2 (372 aa).

This sequence belongs to the glutamate--cysteine ligase type 2 family. YbdK subfamily. As to quaternary structure, homodimer.

The catalysed reaction is L-cysteine + L-glutamate + ATP = gamma-L-glutamyl-L-cysteine + ADP + phosphate + H(+). Its function is as follows. ATP-dependent carboxylate-amine ligase which exhibits weak glutamate--cysteine ligase activity. The polypeptide is Putative glutamate--cysteine ligase 2 (ybdK) (Escherichia coli O157:H7).